The following is a 560-amino-acid chain: Probable methionine--tRNA ligase, cytoplasmic (560 aa).

Residues 16–26 (PYVNNQPHLGN) carry the 'HIGH' region motif. Residues 347-351 (KFSKS) carry the 'KMSKS' region motif. Lys350 provides a ligand contact to ATP.

The protein belongs to the class-I aminoacyl-tRNA synthetase family.

The protein resides in the cytoplasm. It carries out the reaction tRNA(Met) + L-methionine + ATP = L-methionyl-tRNA(Met) + AMP + diphosphate. The sequence is that of Probable methionine--tRNA ligase, cytoplasmic from Vairimorpha ceranae (strain BRL01) (Microsporidian parasite).